We begin with the raw amino-acid sequence, 154 residues long: Ribonuclease H (154 aa).

Positions 5–146 constitute an RNase H type-1 domain; the sequence is EQNIVYLYCD…ADELANRGID (142 aa). Positions 14, 52, 74, and 138 each coordinate Mg(2+).

It belongs to the RNase H family. In terms of assembly, monomer. The cofactor is Mg(2+).

Its subcellular location is the cytoplasm. The enzyme catalyses Endonucleolytic cleavage to 5'-phosphomonoester.. Its function is as follows. Endonuclease that specifically degrades the RNA of RNA-DNA hybrids. The sequence is that of Ribonuclease H from Coxiella burnetii (strain CbuK_Q154) (Coxiella burnetii (strain Q154)).